Consider the following 225-residue polypeptide: MKKNVQIKGTKDGISIFLSDKASISELQQELTQLLADQKQNPYSGEKLEVQVQIGNRLFSEEEEREISTIIHENSQMKISAFYSNVMSKDEAKKWKENDQIFSMATIIRSGQVVQVPGDFLLIGDVNPGGQIRSNGNVFVLGNIKGIIHAGFEGNGNAIVAGKFLYPSQVRIADKVYGFDSEDYKEVTETDLFSAFVNDAGEIVIDGIHKIRKIRPEISNFQGGR.

It belongs to the MinC family. As to quaternary structure, interacts with MinD and FtsZ.

Cell division inhibitor that blocks the formation of polar Z ring septums. Rapidly oscillates between the poles of the cell to destabilize FtsZ filaments that have formed before they mature into polar Z rings. Prevents FtsZ polymerization. This Listeria monocytogenes serotype 4b (strain CLIP80459) protein is Probable septum site-determining protein MinC.